The sequence spans 371 residues: Alginate lyase (371 aa).

Residues Met1–Ala26 form the signal peptide. Residues Ser67–Lys68, His140–Thr141, and Tyr258 each bind substrate.

This sequence belongs to the polysaccharide lyase 5 family.

It is found in the periplasm. It catalyses the reaction Eliminative cleavage of alginate to give oligosaccharides with 4-deoxy-alpha-L-erythro-hex-4-enuronosyl groups at their non-reducing ends and beta-D-mannuronate at their reducing end.. Catalyzes the depolymerization of alginate by cleaving the beta-1,4 glycosidic bond between two adjacent sugar residues via a beta-elimination mechanism. May serve to degrade mislocalized alginate that is trapped in the periplasmic space. This is Alginate lyase from Pseudomonas fluorescens (strain ATCC BAA-477 / NRRL B-23932 / Pf-5).